We begin with the raw amino-acid sequence, 389 residues long: Succinate--CoA ligase [ADP-forming] subunit beta (389 aa).

The 228-residue stretch at 9–236 folds into the ATP-grasp domain; that stretch reads RDMFEAHGVP…KDAADPLEAK (228 aa). Residues Lys-45, 52-54, Ala-94, and Glu-99 each bind ATP; that span reads GRG. Mg(2+) is bound by residues Asn-191 and Asp-205. Residues Asn-256 and 318-320 contribute to the substrate site; that span reads GIT.

It belongs to the succinate/malate CoA ligase beta subunit family. In terms of assembly, heterotetramer of two alpha and two beta subunits. It depends on Mg(2+) as a cofactor.

The catalysed reaction is succinate + ATP + CoA = succinyl-CoA + ADP + phosphate. The enzyme catalyses GTP + succinate + CoA = succinyl-CoA + GDP + phosphate. It functions in the pathway carbohydrate metabolism; tricarboxylic acid cycle; succinate from succinyl-CoA (ligase route): step 1/1. Functionally, succinyl-CoA synthetase functions in the citric acid cycle (TCA), coupling the hydrolysis of succinyl-CoA to the synthesis of either ATP or GTP and thus represents the only step of substrate-level phosphorylation in the TCA. The beta subunit provides nucleotide specificity of the enzyme and binds the substrate succinate, while the binding sites for coenzyme A and phosphate are found in the alpha subunit. This is Succinate--CoA ligase [ADP-forming] subunit beta from Paenarthrobacter aurescens (strain TC1).